The chain runs to 125 residues: Glycine cleavage system H protein (125 aa).

Residues 22–104 (SYVIGITDFA…YDTGWILKLE (83 aa)) form the Lipoyl-binding domain. N6-lipoyllysine is present on Lys-63.

This sequence belongs to the GcvH family. The glycine cleavage system is composed of four proteins: P, T, L and H. (R)-lipoate is required as a cofactor.

The glycine cleavage system catalyzes the degradation of glycine. The H protein shuttles the methylamine group of glycine from the P protein to the T protein. In terms of biological role, is also involved in protein lipoylation via its role as an octanoyl/lipoyl carrier protein intermediate. The chain is Glycine cleavage system H protein from Listeria monocytogenes serotype 4a (strain HCC23).